The sequence spans 510 residues: Rab proteins geranylgeranyltransferase component A 1 (510 aa).

Belongs to the Rab GDI family. May interact with rab-5, rab-7 and rab-11. Does not interact with rab-3, rab-27 and rab-10. As to expression, expressed in several neurons including head neurons, motor neurons located in the ventral nerve cord, HSN and CAN neurons, and tail neurons, and in muscles such as body-wall, pharyngeal, intestinal and anal sphincter. Also expressed in seam cells, the hypodermis and the intestine.

The protein localises to the cytoplasm. Substrate-binding subunit of the Rab geranylgeranyltransferase (GGTase) complex. Binds unprenylated Rab proteins and presents the substrate peptide to the catalytic component B and remains bound to it after the geranylgeranyl transfer reaction. The component A is thought to be regenerated by transferring its prenylated Rab back to the donor membrane. Plays a role in neurotransmitter release from presynaptic terminals at neuromuscular junctions. Positively regulates the function of rab-27 in synaptic transmission most likely through mediating rab-27 prenylation. The sequence is that of Rab proteins geranylgeranyltransferase component A 1 from Caenorhabditis elegans.